The sequence spans 526 residues: Threonine synthase 1, chloroplastic (526 aa).

A chloroplast-targeting transit peptide spans Met-1–Thr-40. S-adenosyl-L-methionine is bound by residues Pro-142–Gly-144, Ser-165–Phe-167, Asn-172, Leu-173, Lys-181, and Asn-187. At Lys-203 the chain carries N6-(pyridoxal phosphate)lysine. Pyridoxal 5'-phosphate contacts are provided by residues Gly-335–Asn-339 and Thr-472.

Belongs to the threonine synthase family. Homodimer. Requires pyridoxal 5'-phosphate as cofactor.

It localises to the plastid. The protein resides in the chloroplast. The catalysed reaction is O-phospho-L-homoserine + H2O = L-threonine + phosphate. It functions in the pathway amino-acid biosynthesis; L-threonine biosynthesis; L-threonine from L-aspartate: step 5/5. Its activity is regulated as follows. Allosterically activated by S-adenosyl-L-methionine (SAM). Activated by S-adenosyl-L-ethionine, 5'-amino-5'-deoxyadenosine, sinefungin and 5'-deoxy-5-methylthioadenosine. Inhibited by AMP. Catalyzes the gamma-elimination of phosphate from L-phosphohomoserine and the beta-addition of water to produce L-threonine. The sequence is that of Threonine synthase 1, chloroplastic (TS1) from Arabidopsis thaliana (Mouse-ear cress).